The following is a 500-amino-acid chain: Enolase (500 aa).

H225 and E234 together coordinate substrate. The active-site Proton donor is the E277. Mg(2+) is bound by residues D312, E361, and D386. E361 and D386 together coordinate substrate. The active-site Proton acceptor is K411. Residues S438 to S441 and K462 each bind substrate.

Belongs to the enolase family. As to quaternary structure, homodimer. Requires Mg(2+) as cofactor.

Its subcellular location is the cytoplasm. It catalyses the reaction (2R)-2-phosphoglycerate = phosphoenolpyruvate + H2O. Its pathway is carbohydrate degradation; glycolysis; pyruvate from D-glyceraldehyde 3-phosphate: step 4/5. Functionally, enzyme of the glycolytic pathway. Glycolysis is essential in glial cells but not in neurons; neurons rely on the citric acid cycle for their energy needs, and on lactate and alanine secreted into the hemolymph by glial cells to fuel it. The protein is Enolase of Drosophila melanogaster (Fruit fly).